Here is an 83-residue protein sequence, read N- to C-terminus: Sec-independent protein translocase protein TatA (83 aa).

A helical membrane pass occupies residues 2–22 (GLGGISIWQLLIVLVIVLLLF). 2 stretches are compositionally biased toward basic and acidic residues: residues 50–65 (AAKQEAEEAEQKKVAA) and 74–83 (AEQKEKTEAK). The interval 50–83 (AAKQEAEEAEQKKVAAEEAAAAKTAEQKEKTEAK) is disordered.

Belongs to the TatA/E family. As to quaternary structure, the Tat system comprises two distinct complexes: a TatABC complex, containing multiple copies of TatA, TatB and TatC subunits, and a separate TatA complex, containing only TatA subunits. Substrates initially bind to the TatABC complex, which probably triggers association of the separate TatA complex to form the active translocon.

The protein resides in the cell inner membrane. Its function is as follows. Part of the twin-arginine translocation (Tat) system that transports large folded proteins containing a characteristic twin-arginine motif in their signal peptide across membranes. TatA could form the protein-conducting channel of the Tat system. In Saccharophagus degradans (strain 2-40 / ATCC 43961 / DSM 17024), this protein is Sec-independent protein translocase protein TatA.